Here is a 179-residue protein sequence, read N- to C-terminus: UPF0303 protein YBR137W (179 aa).

Belongs to the UPF0303 family.

It localises to the cytoplasm. The chain is UPF0303 protein YBR137W from Saccharomyces cerevisiae (strain ATCC 204508 / S288c) (Baker's yeast).